The chain runs to 142 residues: Large ribosomal subunit protein uL13 (142 aa).

This sequence belongs to the universal ribosomal protein uL13 family. Part of the 50S ribosomal subunit.

In terms of biological role, this protein is one of the early assembly proteins of the 50S ribosomal subunit, although it is not seen to bind rRNA by itself. It is important during the early stages of 50S assembly. This chain is Large ribosomal subunit protein uL13, found in Helicobacter hepaticus (strain ATCC 51449 / 3B1).